Consider the following 412-residue polypeptide: 8-amino-7-oxononanoate synthase (412 aa).

Arg28 lines the substrate pocket. 115 to 116 lines the pyridoxal 5'-phosphate pocket; the sequence is GY. His140 lines the substrate pocket. Positions 186, 214, and 246 each coordinate pyridoxal 5'-phosphate. Position 249 is an N6-(pyridoxal phosphate)lysine (Lys249). Thr367 contributes to the substrate binding site.

The protein belongs to the class-II pyridoxal-phosphate-dependent aminotransferase family. BioF subfamily. Homodimer. The cofactor is pyridoxal 5'-phosphate.

It catalyses the reaction 6-carboxyhexanoyl-[ACP] + L-alanine + H(+) = (8S)-8-amino-7-oxononanoate + holo-[ACP] + CO2. It participates in cofactor biosynthesis; biotin biosynthesis. Functionally, catalyzes the decarboxylative condensation of pimeloyl-[acyl-carrier protein] and L-alanine to produce 8-amino-7-oxononanoate (AON), [acyl-carrier protein], and carbon dioxide. This is 8-amino-7-oxononanoate synthase from Paracidovorax citrulli (strain AAC00-1) (Acidovorax citrulli).